We begin with the raw amino-acid sequence, 362 residues long: 3-dehydroquinate synthase (362 aa).

NAD(+)-binding positions include 71-76 (DGEQYK), 105-109 (GVIGD), 129-130 (TT), lysine 142, lysine 151, and 169-172 (CLQT). Glutamate 184, histidine 247, and histidine 264 together coordinate Zn(2+).

The protein belongs to the sugar phosphate cyclases superfamily. Dehydroquinate synthase family. Co(2+) serves as cofactor. The cofactor is Zn(2+). It depends on NAD(+) as a cofactor.

The protein localises to the cytoplasm. It catalyses the reaction 7-phospho-2-dehydro-3-deoxy-D-arabino-heptonate = 3-dehydroquinate + phosphate. The protein operates within metabolic intermediate biosynthesis; chorismate biosynthesis; chorismate from D-erythrose 4-phosphate and phosphoenolpyruvate: step 2/7. Catalyzes the conversion of 3-deoxy-D-arabino-heptulosonate 7-phosphate (DAHP) to dehydroquinate (DHQ). The sequence is that of 3-dehydroquinate synthase from Cronobacter sakazakii (strain ATCC BAA-894) (Enterobacter sakazakii).